A 112-amino-acid chain; its full sequence is Cell cycle protein GpsB (112 aa).

Residues tyrosine 42 to arginine 77 are a coiled coil. The segment at threonine 75–aspartate 97 is disordered. Low complexity predominate over residues asparagine 81 to asparagine 95.

Belongs to the GpsB family. As to quaternary structure, forms polymers through the coiled coil domains. Interacts with PBP1, MreC and EzrA.

It is found in the cytoplasm. Functionally, divisome component that associates with the complex late in its assembly, after the Z-ring is formed, and is dependent on DivIC and PBP2B for its recruitment to the divisome. Together with EzrA, is a key component of the system that regulates PBP1 localization during cell cycle progression. Its main role could be the removal of PBP1 from the cell pole after pole maturation is completed. Also contributes to the recruitment of PBP1 to the division complex. Not essential for septum formation. The protein is Cell cycle protein GpsB of Staphylococcus haemolyticus (strain JCSC1435).